Consider the following 533-residue polypeptide: CEP295 N-terminal-like protein (533 aa).

4 disordered regions span residues 1–40 (MQRD…TTLQ), 84–176 (RSMG…RVTR), 286–333 (LKAD…ETTE), and 370–399 (AGTS…LEDE). A coiled-coil region spans residues 40-72 (QQWKARQLQRLAEELKAEWQEARLQQVRQAERL). Residues 107 to 126 (KERNRAAFREERGRREEHPR) are compositionally biased toward basic and acidic residues. A coiled-coil region spans residues 416-531 (MALRQKQKAE…ARKRLQEFQK (116 aa)).

In terms of tissue distribution, expressed in mature spermatozoa (at protein level). Detected in retina, lung and kidney. In brain, highly expressed in brain-stem, cerebral cortex and thalamus with lesser expression in cerebellum and hippocampus.

Its subcellular location is the cell projection. The protein localises to the cilium. The sequence is that of CEP295 N-terminal-like protein from Mus musculus (Mouse).